We begin with the raw amino-acid sequence, 113 residues long: MSYKKLKRNKDQRKALLKNLTTAFLRDEKIETTEAKAKEVSRLAEKMITLAKKNTLASRRQALSYLTDEDVVTKLFENIGPKFQERQGGYTRVLKKGPRQGDGAPMAILELVE.

It belongs to the bacterial ribosomal protein bL17 family. In terms of assembly, part of the 50S ribosomal subunit. Contacts protein L32.

The polypeptide is Large ribosomal subunit protein bL17 (Natranaerobius thermophilus (strain ATCC BAA-1301 / DSM 18059 / JW/NM-WN-LF)).